Consider the following 125-residue polypeptide: Small ribosomal subunit protein uS13 (125 aa).

A disordered region spans residues 91-125 (HRRSLPVRGQNTQTNARTRKGKRKTVAGKKKAARK). Positions 107 to 125 (RTRKGKRKTVAGKKKAARK) are enriched in basic residues.

It belongs to the universal ribosomal protein uS13 family. In terms of assembly, part of the 30S ribosomal subunit. Forms a loose heterodimer with protein S19. Forms two bridges to the 50S subunit in the 70S ribosome.

Functionally, located at the top of the head of the 30S subunit, it contacts several helices of the 16S rRNA. In the 70S ribosome it contacts the 23S rRNA (bridge B1a) and protein L5 of the 50S subunit (bridge B1b), connecting the 2 subunits; these bridges are implicated in subunit movement. Contacts the tRNAs in the A and P-sites. In Chlorobium phaeovibrioides (strain DSM 265 / 1930) (Prosthecochloris vibrioformis (strain DSM 265)), this protein is Small ribosomal subunit protein uS13.